The primary structure comprises 412 residues: 23S rRNA (uracil(747)-C(5))-methyltransferase (412 aa).

[4Fe-4S] cluster-binding residues include cysteine 63, cysteine 69, cysteine 72, and cysteine 139. S-adenosyl-L-methionine contacts are provided by glutamine 255, tyrosine 281, glutamate 302, and aspartate 343. The active-site Nucleophile is cysteine 369.

Belongs to the class I-like SAM-binding methyltransferase superfamily. RNA M5U methyltransferase family.

The catalysed reaction is uridine(747) in 23S rRNA + S-adenosyl-L-methionine = 5-methyluridine(747) in 23S rRNA + S-adenosyl-L-homocysteine + H(+). Catalyzes the formation of 5-methyl-uridine at position equivalent to 747 (m5U747) in 23S rRNA. The protein is 23S rRNA (uracil(747)-C(5))-methyltransferase of Pyrococcus horikoshii (strain ATCC 700860 / DSM 12428 / JCM 9974 / NBRC 100139 / OT-3).